Consider the following 844-residue polypeptide: Protein translocase subunit SecA 1 (844 aa).

Residues Gln-91, 109–113 (GEGKT), and Asp-498 contribute to the ATP site. The span at 793–813 (KSKSFGEAKHVTAEDGKEKAK) shows a compositional bias: basic and acidic residues. The segment at 793 to 825 (KSKSFGEAKHVTAEDGKEKAKPQPIVKGDQVGR) is disordered. 4 residues coordinate Zn(2+): Cys-829, Cys-831, Cys-840, and His-841.

It belongs to the SecA family. Monomer and homodimer. Part of the essential Sec protein translocation apparatus which comprises SecA, SecYEG and auxiliary proteins SecDF. Other proteins may also be involved. The cofactor is Zn(2+).

It is found in the cell membrane. It localises to the cytoplasm. It catalyses the reaction ATP + H2O + cellular proteinSide 1 = ADP + phosphate + cellular proteinSide 2.. Its function is as follows. Part of the Sec protein translocase complex. Interacts with the SecYEG preprotein conducting channel. Has a central role in coupling the hydrolysis of ATP to the transfer of proteins into and across the cell membrane, serving as an ATP-driven molecular motor driving the stepwise translocation of polypeptide chains across the membrane. This Staphylococcus epidermidis (strain ATCC 35984 / DSM 28319 / BCRC 17069 / CCUG 31568 / BM 3577 / RP62A) protein is Protein translocase subunit SecA 1.